A 193-amino-acid chain; its full sequence is Ion-translocating oxidoreductase complex subunit A (193 aa).

6 helical membrane-spanning segments follow: residues 5–25 (LLLFVGTVLVNNFVLVKFLGL), 39–59 (MGMGLATTFVMTLASICAWLI), 63–83 (ILIPLNLIYLRTLAFILVIAV), 102–122 (LLGIFLPLITTNCAVLGVALL), 134–154 (ALYGFSAAVGFSLVMVLFAAI), and 171–191 (AIALITAGLMSLAFMGFSGLV).

This sequence belongs to the NqrDE/RnfAE family. As to quaternary structure, the complex is composed of six subunits: RsxA, RsxB, RsxC, RsxD, RsxE and RsxG.

The protein localises to the cell inner membrane. Its function is as follows. Part of a membrane-bound complex that couples electron transfer with translocation of ions across the membrane. Required to maintain the reduced state of SoxR. The chain is Ion-translocating oxidoreductase complex subunit A from Shigella boydii serotype 18 (strain CDC 3083-94 / BS512).